A 617-amino-acid polypeptide reads, in one-letter code: Electron transfer flavoprotein-ubiquinone oxidoreductase, mitochondrial (617 aa).

The N-terminal 33 residues, 1 to 33, are a transit peptide targeting the mitochondrion; it reads MLVPLAKLSCLAYQCFHALKIKKNYLPLCATRW. 71 to 85 is an FAD binding site; sequence VVIVGAGPAGLSAAV. N6-acetyllysine is present on Lys-96. The stretch at 109 to 130 is an intramembrane region; that stretch reads IGAHTLSGACLDPGAFKELFPD. Residues Lys-132 and Lys-223 each carry the N6-acetyllysine modification. Residues Gly-305 and Gly-306 each coordinate a ubiquinone. At Lys-357 the chain carries N6-acetyllysine. Residues 428-447 lie within the membrane without spanning it; the sequence is IGLHVTEYEDNLKNSWVWKE. Position 551 is a phosphoserine (Ser-551). The [4Fe-4S] cluster site is built by Cys-561, Cys-586, Cys-589, and Cys-592. One can recognise a 4Fe-4S ferredoxin-type domain in the interval 577–606; sequence FRLQINAQNCVHCKTCDIKDPSQNINWVVP.

The protein belongs to the ETF-QO/FixC family. In terms of assembly, monomer. [4Fe-4S] cluster serves as cofactor. The cofactor is FAD.

The protein localises to the mitochondrion inner membrane. The catalysed reaction is a ubiquinone + reduced [electron-transfer flavoprotein] = a ubiquinol + oxidized [electron-transfer flavoprotein] + H(+). Accepts electrons from ETF and reduces ubiquinone. The protein is Electron transfer flavoprotein-ubiquinone oxidoreductase, mitochondrial of Homo sapiens (Human).